The primary structure comprises 153 residues: Deoxyuridine 5'-triphosphate nucleotidohydrolase (153 aa).

Substrate is bound by residues 71–73 (RSG), N84, 88–90 (TID), and K98.

The protein belongs to the dUTPase family. Requires Mg(2+) as cofactor.

It catalyses the reaction dUTP + H2O = dUMP + diphosphate + H(+). Its pathway is pyrimidine metabolism; dUMP biosynthesis; dUMP from dCTP (dUTP route): step 2/2. In terms of biological role, this enzyme is involved in nucleotide metabolism: it produces dUMP, the immediate precursor of thymidine nucleotides and it decreases the intracellular concentration of dUTP so that uracil cannot be incorporated into DNA. The sequence is that of Deoxyuridine 5'-triphosphate nucleotidohydrolase from Wolbachia pipientis subsp. Culex pipiens (strain wPip).